The chain runs to 421 residues: Transcription factor rglT (421 aa).

The interval Met-1–Ser-29 is disordered. Over residues Trp-8–Ser-29 the composition is skewed to polar residues. Positions Cys-38–Cys-65 form a DNA-binding region, zn(2)-C6 fungal-type. Basic and acidic residues predominate over residues Glu-346–Asp-357. Residues Glu-346–Ser-371 form a disordered region.

The protein localises to the nucleus. In terms of biological role, transcription factor that is important for oxidative stress resistance and essential for gliotoxin (GT) self-protection through the regulation of a gene encoding a putative gliT homolog, even if E.nidulans does not produce gliotoxin itself. The polypeptide is Transcription factor rglT (Emericella nidulans (strain FGSC A4 / ATCC 38163 / CBS 112.46 / NRRL 194 / M139) (Aspergillus nidulans)).